The following is a 774-amino-acid chain: Lysyl oxidase homolog 2 (774 aa).

An N-terminal signal peptide occupies residues 1-25; sequence MERRGSSCLCRCLALLALLPTLSLA. SRCR domains are found at residues 58–159, 188–302, 326–425, and 435–544; these read LRLA…VVCS, IRAI…VSCV, VRLR…VRCN, and LRLN…VACS. 9 disulfides stabilise this stretch: C84–C148, C97–C158, C128–C138, C218–C291, C231–C301, C265–C275, C351–C414, C364–C424, and C395–C405. N-linked (GlcNAc...) asparagine glycosylation is present at N288. A glycan (N-linked (GlcNAc...) asparagine) is linked at N455. Intrachain disulfides connect C464–C530, C477–C543, and C511–C521. The interval 548-751 is lysyl-oxidase like; the sequence is PDLVLNAEIV…WMYNCHIGGS (204 aa). Residues D549 and L550 each contribute to the Ca(2+) site. Cystine bridges form between C573–C625, C579–C695, C657–C673, and C663–C685. Residues H626, H628, and H630 each contribute to the Cu cation site. N-linked (GlcNAc...) asparagine glycosylation occurs at N644. Positions 653–689 form a cross-link, lysine tyrosylquinone (Lys-Tyr); sequence KASFCLEDTECEGDIQKSYECANFGEQGITMGCWDMY. Y689 is subject to 2',4',5'-topaquinone. Residues E722, D724, N727, and N728 each coordinate Ca(2+). An intrachain disulfide couples C732 to C746.

The protein belongs to the lysyl oxidase family. As to quaternary structure, component of some chromatin repressor complex. Interacts with SNAI1. Interacts with TAF10. Interacts with HSPA5. Interacts with EFEMP2. Cu cation serves as cofactor. Lysine tyrosylquinone residue is required as a cofactor. The lysine tyrosylquinone cross-link (LTQ) is generated by condensation of the epsilon-amino group of a lysine with a topaquinone produced by oxidation of tyrosine. In terms of processing, N-glycosylated. N-glycosylation on Asn-455 and Asn-644 may be essential for proper folding and secretion; may be composed of a fucosylated carbohydrates attached to a trimannose N-linked glycan core.

It is found in the secreted. The protein localises to the extracellular space. Its subcellular location is the extracellular matrix. It localises to the basement membrane. The protein resides in the nucleus. It is found in the chromosome. The protein localises to the endoplasmic reticulum. It carries out the reaction L-lysyl-[protein] + O2 + H2O = (S)-2-amino-6-oxohexanoyl-[protein] + H2O2 + NH4(+). Specifically inhibited by a mouse monoclonal antibody AB0023, inhibition occurs in a non-competitive manner. Mediates the post-translational oxidative deamination of lysine residues on target proteins leading to the formation of deaminated lysine (allysine). Acts as a transcription corepressor and specifically mediates deamination of trimethylated 'Lys-4' of histone H3 (H3K4me3), a specific tag for epigenetic transcriptional activation. Shows no activity against histone H3 when it is trimethylated on 'Lys-9' (H3K9me3) or 'Lys-27' (H3K27me3) or when 'Lys-4' is monomethylated (H3K4me1) or dimethylated (H3K4me2). Also mediates deamination of methylated TAF10, a member of the transcription factor IID (TFIID) complex, which induces release of TAF10 from promoters, leading to inhibition of TFIID-dependent transcription. LOXL2-mediated deamination of TAF10 results in transcriptional repression of genes required for embryonic stem cell pluripotency including POU5F1/OCT4, NANOG, KLF4 and SOX2. Involved in epithelial to mesenchymal transition (EMT) via interaction with SNAI1 and participates in repression of E-cadherin CDH1, probably by mediating deamination of histone H3. During EMT, involved with SNAI1 in negatively regulating pericentromeric heterochromatin transcription. SNAI1 recruits LOXL2 to pericentromeric regions to oxidize histone H3 and repress transcription which leads to release of heterochromatin component CBX5/HP1A, enabling chromatin reorganization and acquisition of mesenchymal traits. Interacts with the endoplasmic reticulum protein HSPA5 which activates the IRE1-XBP1 pathway of the unfolded protein response, leading to expression of several transcription factors involved in EMT and subsequent EMT induction. When secreted into the extracellular matrix, promotes cross-linking of extracellular matrix proteins by mediating oxidative deamination of peptidyl lysine residues in precursors to fibrous collagen and elastin. Acts as a regulator of sprouting angiogenesis, probably via collagen IV scaffolding. Acts as a regulator of chondrocyte differentiation, probably by regulating expression of factors that control chondrocyte differentiation. This is Lysyl oxidase homolog 2 (LOXL2) from Bos taurus (Bovine).